The chain runs to 225 residues: MMYHIPGVLSPKDVARFREQLEQAEWVDGRVTTGAQGAQVKNNQQVDTRSALYAALQNEVLNAVNQHALFFAAALPRTLSTPLFNRYQNNETYGFHVDGAVRSHPQNGWMRTDLSATLFLSDPQSYDGGELVVNDTFGQHRVKLPAGDLVLYPSSSLHCVTPVTRGVRVASFMWIQSMIRDDKKRAMLFELDTNIQSLKSRHGESEEILSLLNLYHNLLREWSEI.

One can recognise a Fe2OG dioxygenase domain in the interval 78–177 (TLSTPLFNRY…RVASFMWIQS (100 aa)). Fe cation contacts are provided by His-96, Asp-98, and His-158. 2-oxoglutarate is bound at residue Arg-168.

Requires Fe(2+) as cofactor. L-ascorbate is required as a cofactor.

This chain is PKHD-type hydroxylase YbiX, found in Escherichia fergusonii (strain ATCC 35469 / DSM 13698 / CCUG 18766 / IAM 14443 / JCM 21226 / LMG 7866 / NBRC 102419 / NCTC 12128 / CDC 0568-73).